A 562-amino-acid polypeptide reads, in one-letter code: Adenylate kinase isoenzyme 5 (562 aa).

Adenylate kinase stretches follow at residues 133–316 and 377–559; these read KIIL…MAVD and KIIF…TAID. An ATP-binding site is contributed by 142 to 147; it reads GSGKGT. The interval 162–193 is NMP 1; it reads SVGELLRKKIHSTSSNRKWSLIAKIITTGELA. AMP is bound by residues Arg168, 191-193, 219-222, and Gln226; these read ELA and GFPR. The tract at residues 256–266 is LID 1; it reads KRAEQQGRPDD. Arg257 is an ATP binding site. Residues Arg263 and Arg274 each contribute to the AMP site. An ATP-binding site is contributed by 386-391; it reads GSGKGT. Residues 406–435 are NMP 2; it reads STGELLREELASESERSKLIRDIMERGDLV. Residues Thr407, Arg412, 433 to 435, 462 to 465, and Gln469 each bind AMP; these read DLV and GYPR. The LID 2 stretch occupies residues 499-509; the sequence is QRSRSSLPVDD. Position 500 (Arg500) interacts with ATP. AMP is bound at residue Arg517. Residue Gly545 coordinates ATP.

It belongs to the adenylate kinase family. As to quaternary structure, monomer. Interacts with YWHAZ. In terms of tissue distribution, brain specific.

It localises to the cytoplasm. It carries out the reaction AMP + ATP = 2 ADP. The catalysed reaction is a 2'-deoxyribonucleoside 5'-diphosphate + ATP = a 2'-deoxyribonucleoside 5'-triphosphate + ADP. It catalyses the reaction a ribonucleoside 5'-diphosphate + ATP = a ribonucleoside 5'-triphosphate + ADP. Functionally, nucleoside monophosphate (NMP) kinase that catalyzes the reversible transfer of the terminal phosphate group between nucleoside triphosphates and monophosphates. Active on AMP and dAMP with ATP as a donor. When GTP is used as phosphate donor, the enzyme phosphorylates AMP, CMP, and to a small extent dCMP. Also displays broad nucleoside diphosphate kinase activity. The sequence is that of Adenylate kinase isoenzyme 5 (AK5) from Homo sapiens (Human).